The primary structure comprises 346 residues: DNA-directed RNA polymerases I and III subunit RPAC1 (346 aa).

Position 2 is an N-acetylalanine (Ala-2).

It belongs to the archaeal Rpo3/eukaryotic RPB3 RNA polymerase subunit family. As to quaternary structure, component of the RNA polymerase I and RNA polymerase III complexes consisting of at least 13 and 17 subunits, respectively. Pol I complex consists of a ten-subunit catalytic core composed of POLR1A/RPA1, POLR1B/RPA2, POLR1C/RPAC1, POLR1D/RPAC2, POLR1H/RPA12, POLR2E/RPABC1, POLR2F/RPABC2, POLR2H/RPABC3, POLR2K/RPABC4 and POLR2L/RPABC5; a mobile stalk subunit POLR1F/RPA43 protruding from the core and additional subunits homologous to general transcription factors POLR1E/RPA49 and POLR1G/RPA34. Part of Pol I pre-initiation complex (PIC), in which Pol I core assembles with RRN3 and promoter-bound UTBF and SL1/TIF-IB complex. Pol III complex consists of a ten-subunit catalytic core composed of POLR3A/RPC1, POLR3B/RPC2, POLR1C/RPAC1, POLR1D/RPAC2, POLR3K/RPC10, POLR2E/RPABC1, POLR2F/RPABC2, POLR2H/RPABC3, POLR2K/RPABC4 and POLR2L/RPABC5; a mobile stalk composed of two subunits POLR3H/RPC8 and CRCP/RPC9, protruding from the core and functioning primarily in transcription initiation; and additional subunits homologous to general transcription factors of the RNA polymerase II machinery, POLR3C/RPC3-POLR3F/RPC6-POLR3G/RPC7 heterotrimer required for transcription initiation and POLR3D/RPC4-POLR3E/RPC5 heterodimer involved in both transcription initiation and termination.

The protein localises to the nucleus. It localises to the cytoplasm. It is found in the cytosol. In terms of biological role, DNA-dependent RNA polymerase catalyzes the transcription of DNA into RNA using the four ribonucleoside triphosphates as substrates. Common component of RNA polymerases I and III which synthesize ribosomal RNA precursors and short non-coding RNAs including 5S rRNA, snRNAs, tRNAs and miRNAs, respectively. POLR1C/RPAC1 is part of the polymerase core and may function as a clamp element that moves to open and close the cleft. The protein is DNA-directed RNA polymerases I and III subunit RPAC1 of Mus musculus (Mouse).